Reading from the N-terminus, the 282-residue chain is Phosphatidylserine decarboxylase proenzyme (282 aa).

Catalysis depends on charge relay system; for autoendoproteolytic cleavage activity residues aspartate 88, histidine 144, and serine 247. Serine 247 (schiff-base intermediate with substrate; via pyruvic acid; for decarboxylase activity) is an active-site residue. Serine 247 bears the Pyruvic acid (Ser); by autocatalysis mark.

The protein belongs to the phosphatidylserine decarboxylase family. PSD-B subfamily. Prokaryotic type I sub-subfamily. In terms of assembly, heterodimer of a large membrane-associated beta subunit and a small pyruvoyl-containing alpha subunit. Pyruvate serves as cofactor. Is synthesized initially as an inactive proenzyme. Formation of the active enzyme involves a self-maturation process in which the active site pyruvoyl group is generated from an internal serine residue via an autocatalytic post-translational modification. Two non-identical subunits are generated from the proenzyme in this reaction, and the pyruvate is formed at the N-terminus of the alpha chain, which is derived from the carboxyl end of the proenzyme. The autoendoproteolytic cleavage occurs by a canonical serine protease mechanism, in which the side chain hydroxyl group of the serine supplies its oxygen atom to form the C-terminus of the beta chain, while the remainder of the serine residue undergoes an oxidative deamination to produce ammonia and the pyruvoyl prosthetic group on the alpha chain. During this reaction, the Ser that is part of the protease active site of the proenzyme becomes the pyruvoyl prosthetic group, which constitutes an essential element of the active site of the mature decarboxylase.

The protein resides in the cell membrane. It catalyses the reaction a 1,2-diacyl-sn-glycero-3-phospho-L-serine + H(+) = a 1,2-diacyl-sn-glycero-3-phosphoethanolamine + CO2. It functions in the pathway phospholipid metabolism; phosphatidylethanolamine biosynthesis; phosphatidylethanolamine from CDP-diacylglycerol: step 2/2. Catalyzes the formation of phosphatidylethanolamine (PtdEtn) from phosphatidylserine (PtdSer). The protein is Phosphatidylserine decarboxylase proenzyme of Xanthomonas campestris pv. campestris (strain 8004).